Consider the following 176-residue polypeptide: uncharacterized protein (176 aa).

This is an uncharacterized protein from Bacillus anthracis.